The chain runs to 520 residues: Cytochrome P450 4F8 (520 aa).

Residues Ala-15–Trp-37 traverse the membrane as a helical segment. Position 468 (Cys-468) interacts with heme.

It belongs to the cytochrome P450 family. Heme is required as a cofactor. As to expression, expressed in the epithelium of seminal vesicles, in renal cortex, in adult and fetal liver, in epidermis, in corneal epithelium, in sweat glands, hair follicles, epithelial linings of the ampulla of vas deferens and of the stomach and small intestine, as well as in the transitional epithelium of the bladder and ureter (at protein level). In the epidermis, expressed from the basal cell to the granular cell layers. In the corneal epithelium, expressed in all cell layers. Also detected in prostate. Up-regulated in the epidermis of psoriatic lesions.

The protein resides in the endoplasmic reticulum membrane. It is found in the microsome membrane. The enzyme catalyses an organic molecule + reduced [NADPH--hemoprotein reductase] + O2 = an alcohol + oxidized [NADPH--hemoprotein reductase] + H2O + H(+). The catalysed reaction is (5Z,8Z,11Z,14Z)-eicosatetraenoate + reduced [NADPH--hemoprotein reductase] + O2 = (18R)-hydroxy-(5Z,8Z,11Z,14Z)-eicosatetraenoate + oxidized [NADPH--hemoprotein reductase] + H2O + H(+). It carries out the reaction (4Z,7Z,10Z,13Z,16Z)-docosapentaenoate + reduced [NADPH--hemoprotein reductase] + O2 = 20-hydroxy-(4Z,7Z,10Z,13Z,16Z)-docosapentaenoate + oxidized [NADPH--hemoprotein reductase] + H2O + H(+). It catalyses the reaction prostaglandin H1 + reduced [NADPH--hemoprotein reductase] + O2 = 19-hydroxyprostaglandin H1 + oxidized [NADPH--hemoprotein reductase] + H2O + H(+). The enzyme catalyses prostaglandin H2 + reduced [NADPH--hemoprotein reductase] + O2 = 19-hydroxyprostaglandin H2 + oxidized [NADPH--hemoprotein reductase] + H2O + H(+). The catalysed reaction is prostaglandin I2 + reduced [NADPH--hemoprotein reductase] + O2 = 19-hydroxy-prostaglandin I2 + oxidized [NADPH--hemoprotein reductase] + H2O + H(+). It carries out the reaction (4Z,7Z,10Z,13Z,16Z,19Z)-docosahexaenoate + reduced [NADPH--hemoprotein reductase] + O2 = 10,11-epoxy-(4Z,7Z,13Z,16Z,19Z)-docosapentaenoate + oxidized [NADPH--hemoprotein reductase] + H2O + H(+). It catalyses the reaction (4Z,7Z,10Z,13Z,16Z,19Z)-docosahexaenoate + reduced [NADPH--hemoprotein reductase] + O2 = 13,14-epoxy-(4Z,7Z,10Z,16Z,19Z)-docosapentaenoate + oxidized [NADPH--hemoprotein reductase] + H2O + H(+). The enzyme catalyses (4Z,7Z,10Z,13Z,16Z,19Z)-docosahexaenoate + reduced [NADPH--hemoprotein reductase] + O2 = 16,17-epoxy-(4Z,7Z,10Z,13Z,19Z)-docosapentaenoate + oxidized [NADPH--hemoprotein reductase] + H2O + H(+). The catalysed reaction is (4Z,7Z,10Z,13Z,16Z,19Z)-docosahexaenoate + reduced [NADPH--hemoprotein reductase] + O2 = 19,20-epoxy-(4Z,7Z,10Z,13Z,16Z)-docosapentaenoate + oxidized [NADPH--hemoprotein reductase] + H2O + H(+). It carries out the reaction (7Z,10Z,13Z,16Z,19Z)-docosapentaenoate + reduced [NADPH--hemoprotein reductase] + O2 = 10,11-epoxy-(7Z,13Z,16Z,19Z)-docosatetraenoate + oxidized [NADPH--hemoprotein reductase] + H2O + H(+). It catalyses the reaction (7Z,10Z,13Z,16Z,19Z)-docosapentaenoate + reduced [NADPH--hemoprotein reductase] + O2 = 13,14-epoxy-(7Z,10Z,16Z,19Z)-docosatetraenoate + oxidized [NADPH--hemoprotein reductase] + H2O + H(+). The enzyme catalyses (7Z,10Z,13Z,16Z,19Z)-docosapentaenoate + reduced [NADPH--hemoprotein reductase] + O2 = 16,17-epoxy-(7Z,10Z,13Z,19Z)-docosatetraenoate + oxidized [NADPH--hemoprotein reductase] + H2O + H(+). The catalysed reaction is (7Z,10Z,13Z,16Z,19Z)-docosapentaenoate + reduced [NADPH--hemoprotein reductase] + O2 = 19,20-epoxy-(7Z,10Z,13Z,16Z)-docosatetraenoate + oxidized [NADPH--hemoprotein reductase] + H2O + H(+). It participates in lipid metabolism; fatty acid metabolism. In terms of biological role, a cytochrome P450 monooxygenase involved in the metabolism of endogenous polyunsaturated fatty acids (PUFAs) and their oxygenated derivatives (oxylipins). Mechanistically, uses molecular oxygen inserting one oxygen atom into a substrate, and reducing the second into a water molecule, with two electrons provided by NADPH via cytochrome P450 reductase (CPR; NADPH-ferrihemoprotein reductase). Catalyzes the hydroxylation of carbon hydrogen bonds, with preference for omega-1 and omega-2 positions. Hydroxylates (5Z,8Z,11Z,14Z)-eicosatetraenoic acid (arachidonate) predominantly at omega-2 position to form (18R)-hydroxyeicosatetraenoic acid (18R-HETE). Exhibits omega-1 hydroxylase activity toward prostaglandin (PG) H1, PGH2 and PGI2. Catalyzes the epoxidation of double bonds of PUFAs, including docosahexaenoic and docosapentaenoic acids. Shows little activity against PGD2, PGE1, PGE2, PGF2alpha, and leukotriene B4. The sequence is that of Cytochrome P450 4F8 from Homo sapiens (Human).